The chain runs to 206 residues: D-ribitol-5-phosphate phosphatase (206 aa).

Asp-8 functions as the Nucleophile in the catalytic mechanism. The Mg(2+) site is built by Asp-8 and Asp-172.

The protein belongs to the HAD-like hydrolase superfamily. It depends on Mg(2+) as a cofactor.

It catalyses the reaction D-ribitol 1-phosphate + H2O = ribitol + phosphate. It carries out the reaction D-ribitol 5-phosphate + H2O = ribitol + phosphate. The enzyme catalyses 5-amino-6-(5-phospho-D-ribitylamino)uracil + H2O = 5-amino-6-(D-ribitylamino)uracil + phosphate. It participates in cofactor biosynthesis; riboflavin biosynthesis; 5-amino-6-(D-ribitylamino)uracil from GTP: step 4/4. In terms of biological role, catalyzes the dephosphorylation of D-ribitol-5-phosphate and D-ribitol-1-phosphate. Is also able to dephosphorylate 5-amino-6-(5-phospho-D-ribitylamino)uracil, and thus could be involved in the riboflavin biosynthesis pathway. The sequence is that of D-ribitol-5-phosphate phosphatase from Bacteroides thetaiotaomicron (strain ATCC 29148 / DSM 2079 / JCM 5827 / CCUG 10774 / NCTC 10582 / VPI-5482 / E50).